Here is a 382-residue protein sequence, read N- to C-terminus: Galactokinase (382 aa).

Residue 34 to 37 (EHTD) coordinates substrate. ATP is bound at residue 124-130 (GAGLSSS). Residues S130 and E162 each contribute to the Mg(2+) site. D174 acts as the Proton acceptor in catalysis. Residue Y223 participates in substrate binding.

This sequence belongs to the GHMP kinase family. GalK subfamily.

It localises to the cytoplasm. It carries out the reaction alpha-D-galactose + ATP = alpha-D-galactose 1-phosphate + ADP + H(+). The protein operates within carbohydrate metabolism; galactose metabolism. Catalyzes the transfer of the gamma-phosphate of ATP to D-galactose to form alpha-D-galactose-1-phosphate (Gal-1-P). The polypeptide is Galactokinase (Escherichia coli O17:K52:H18 (strain UMN026 / ExPEC)).